We begin with the raw amino-acid sequence, 1041 residues long: Isoleucine--tRNA ligase (1041 aa).

The 'HIGH' region motif lies at 53-63 (PFANGLPHYGH). The short motif at 619–623 (KMSKS) is the 'KMSKS' region element. Lysine 622 serves as a coordination point for ATP.

This sequence belongs to the class-I aminoacyl-tRNA synthetase family. IleS type 2 subfamily. As to quaternary structure, monomer. Zn(2+) is required as a cofactor.

It is found in the cytoplasm. The catalysed reaction is tRNA(Ile) + L-isoleucine + ATP = L-isoleucyl-tRNA(Ile) + AMP + diphosphate. Functionally, catalyzes the attachment of isoleucine to tRNA(Ile). As IleRS can inadvertently accommodate and process structurally similar amino acids such as valine, to avoid such errors it has two additional distinct tRNA(Ile)-dependent editing activities. One activity is designated as 'pretransfer' editing and involves the hydrolysis of activated Val-AMP. The other activity is designated 'posttransfer' editing and involves deacylation of mischarged Val-tRNA(Ile). The chain is Isoleucine--tRNA ligase from Mycobacterium bovis (strain ATCC BAA-935 / AF2122/97).